The sequence spans 255 residues: Tabinhibitin 1 (255 aa).

The signal sequence occupies residues 1-23 (MTSILVSRFLIAALVLQYATSDA). The SCP domain maps to 67–211 (LSKINDVRDH…KARALLTCNF (145 aa)).

This sequence belongs to the CRISP family. In terms of tissue distribution, expressed in salivary glands.

It is found in the secreted. In terms of biological role, inhibits platelet aggregation induced by all agonists tested. May act by competing with fibrinogen for binding to glycoprotein IIb/IIIa (ITGA2B/ITGB3). The polypeptide is Tabinhibitin 1 (Tabanus yao (Horsefly)).